Consider the following 439-residue polypeptide: Microfibrillar-associated protein 1 (439 aa).

Polar residues predominate over residues 1–17 (MSVPSSLMKQPPIQSTA). Residues 1–200 (MSVPSSLMKQ…SEDEMEPRLK (200 aa)) form a disordered region. The residue at position 2 (S2) is an N-acetylserine. Residues 23–34 (RNEKGEISMEKV) show a composition bias toward basic and acidic residues. Residues S52 and S53 each carry the phosphoserine modification. Residues 61–70 (QFIKKAKEQE) are compositionally biased toward basic and acidic residues. Residue K67 forms a Glycyl lysine isopeptide (Lys-Gly) (interchain with G-Cter in SUMO2) linkage. The span at 71-81 (AEPEEQEEDSS) shows a compositional bias: acidic residues. S94, S116, S118, S132, and S133 each carry phosphoserine. Acidic residues-rich tracts occupy residues 112-122 (VVGESDSEVEG) and 131-144 (DSSEEEEEEIDEEE). Residues 145–163 (IERRRGMMRQRAQERKNEE) show a composition bias toward basic and acidic residues. Positions 178–195 (ESESESEYEEYTDSEDEM) are enriched in acidic residues. K249 participates in a covalent cross-link: Glycyl lysine isopeptide (Lys-Gly) (interchain with G-Cter in SUMO2). T267 is modified (phosphothreonine). Residue K357 forms a Glycyl lysine isopeptide (Lys-Gly) (interchain with G-Cter in SUMO2) linkage. S361 is subject to Phosphoserine. Glycyl lysine isopeptide (Lys-Gly) (interchain with G-Cter in SUMO2) cross-links involve residues K371, K381, K415, and K418. S432 carries the post-translational modification Phosphoserine.

It belongs to the MFAP1 family. Component of the spliceosome B complex. Interacts with PRPF38A (via N-terminal interaction domain).

The protein localises to the nucleus. In terms of biological role, involved in pre-mRNA splicing as a component of the spliceosome. The chain is Microfibrillar-associated protein 1 from Bos taurus (Bovine).